Reading from the N-terminus, the 280-residue chain is Putative pyruvate, phosphate dikinase regulatory protein (280 aa).

ADP is bound at residue 156 to 163 (GVSRTSKT).

Belongs to the pyruvate, phosphate/water dikinase regulatory protein family. PDRP subfamily.

It catalyses the reaction N(tele)-phospho-L-histidyl/L-threonyl-[pyruvate, phosphate dikinase] + ADP = N(tele)-phospho-L-histidyl/O-phospho-L-threonyl-[pyruvate, phosphate dikinase] + AMP + H(+). The enzyme catalyses N(tele)-phospho-L-histidyl/O-phospho-L-threonyl-[pyruvate, phosphate dikinase] + phosphate + H(+) = N(tele)-phospho-L-histidyl/L-threonyl-[pyruvate, phosphate dikinase] + diphosphate. Functionally, bifunctional serine/threonine kinase and phosphorylase involved in the regulation of the pyruvate, phosphate dikinase (PPDK) by catalyzing its phosphorylation/dephosphorylation. In Hyphomonas neptunium (strain ATCC 15444), this protein is Putative pyruvate, phosphate dikinase regulatory protein.